We begin with the raw amino-acid sequence, 326 residues long: Tumor necrosis factor soluble receptor (326 aa).

The first 16 residues, 1–16 (MFRLTLLLAYVACVYG), serve as a signal peptide directing secretion. TNFR-Cys repeat units lie at residues 27–62 (KCRG…TVCS), 63–104 (PCKN…DRVC), 105–147 (DCSA…VLCT), and 148–186 (KCPR…TSCT). Cystine bridges form between Cys-28-Cys-39, Cys-40-Cys-53, Cys-43-Cys-61, Cys-64-Cys-79, Cys-82-Cys-96, Cys-86-Cys-104, Cys-106-Cys-120, Cys-123-Cys-146, Cys-129-Cys-149, and Cys-164-Cys-185. N-linked (GlcNAc...) asparagine; by host glycosylation occurs at Asn-66. N-linked (GlcNAc...) asparagine; by host glycans are attached at residues Asn-181, Asn-205, and Asn-238.

In terms of biological role, binds to TNF-alpha and beta. Probably prevents TNF to reach cellular target and thereby deampening the potential antiviral effects of the cytokine. This Oryctolagus cuniculus (Rabbit) protein is Tumor necrosis factor soluble receptor.